Reading from the N-terminus, the 319-residue chain is tRNA (guanine(9)-N(1))-methyltransferase Trmt10A (319 aa).

Disordered regions lie at residues 16–87 and 275–319; these read LSLN…KRQL and AKIT…SLDS. Positions 17-33 are enriched in polar residues; it reads SLNNCPGTTPGTPMSKN. Positions 35-42 match the Nuclear localization signal motif; sequence LKKQRKLA. 3 stretches are compositionally biased toward basic and acidic residues: residues 40-58, 78-87, and 276-302; these read KLAE…EREK, SRKELKKRQL, and KITD…ESDK. The stretch at 44 to 67 forms a coiled coil; sequence FAELRKLRREREREKKKQKRREAK. One can recognise an SAM-dependent MTase TRM10-type domain in the interval 83-274; the sequence is KKRQLADGGK…ETIPMRKGAK (192 aa).

The protein belongs to the class IV-like SAM-binding methyltransferase superfamily. TRM10 family.

The protein resides in the nucleus. Its subcellular location is the nucleolus. The protein localises to the chromosome. The enzyme catalyses guanosine(9) in tRNA + S-adenosyl-L-methionine = N(1)-methylguanosine(9) in tRNA + S-adenosyl-L-homocysteine + H(+). S-adenosyl-L-methionine-dependent guanine N(1)-methyltransferase that catalyzes the formation of N(1)-methylguanine at position 9 (m1G9) in tRNAs. Modulates Mettl3-mediated N6-methyladenosine (m6A) methylation of mRNA 5'-UTRs and 3'-UTRs independent of its methyltransferase activity; influences mRNA stability and protein levels, in particular of Hsp70 chaperone proteins and other stress response proteins. Also regulates stability of transcripts encoding proteins involved in signaling processes and proteins involved in neurogenesis and axon guidance pathways. The chain is tRNA (guanine(9)-N(1))-methyltransferase Trmt10A from Drosophila melanogaster (Fruit fly).